A 255-amino-acid chain; its full sequence is Triosephosphate isomerase (255 aa).

Residue 10 to 12 (NWK) participates in substrate binding. The active-site Electrophile is the histidine 96. Residue glutamate 169 is the Proton acceptor of the active site. Substrate contacts are provided by residues glycine 175, serine 214, and 235-236 (GG).

The protein belongs to the triosephosphate isomerase family. Homodimer.

It is found in the cytoplasm. The enzyme catalyses D-glyceraldehyde 3-phosphate = dihydroxyacetone phosphate. It functions in the pathway carbohydrate biosynthesis; gluconeogenesis. Its pathway is carbohydrate degradation; glycolysis; D-glyceraldehyde 3-phosphate from glycerone phosphate: step 1/1. In terms of biological role, involved in the gluconeogenesis. Catalyzes stereospecifically the conversion of dihydroxyacetone phosphate (DHAP) to D-glyceraldehyde-3-phosphate (G3P). This is Triosephosphate isomerase from Coxiella burnetii (strain Dugway 5J108-111).